Reading from the N-terminus, the 261-residue chain is Phosphate import ATP-binding protein PstB 4 (261 aa).

One can recognise an ABC transporter domain in the interval isoleucine 8–valine 256. An ATP-binding site is contributed by glycine 40 to serine 47.

Belongs to the ABC transporter superfamily. Phosphate importer (TC 3.A.1.7) family. In terms of assembly, the complex is composed of two ATP-binding proteins (PstB), two transmembrane proteins (PstC and PstA) and a solute-binding protein (PstS).

The protein resides in the cell inner membrane. It catalyses the reaction phosphate(out) + ATP + H2O = ADP + 2 phosphate(in) + H(+). In terms of biological role, part of the ABC transporter complex PstSACB involved in phosphate import. Responsible for energy coupling to the transport system. The polypeptide is Phosphate import ATP-binding protein PstB 4 (Trichormus variabilis (strain ATCC 29413 / PCC 7937) (Anabaena variabilis)).